Consider the following 249-residue polypeptide: Tryptophan synthase alpha chain (249 aa).

Active-site proton acceptor residues include glutamate 43 and aspartate 54.

It belongs to the TrpA family. Tetramer of two alpha and two beta chains.

It catalyses the reaction (1S,2R)-1-C-(indol-3-yl)glycerol 3-phosphate + L-serine = D-glyceraldehyde 3-phosphate + L-tryptophan + H2O. It functions in the pathway amino-acid biosynthesis; L-tryptophan biosynthesis; L-tryptophan from chorismate: step 5/5. Its function is as follows. The alpha subunit is responsible for the aldol cleavage of indoleglycerol phosphate to indole and glyceraldehyde 3-phosphate. This chain is Tryptophan synthase alpha chain, found in Campylobacter jejuni subsp. jejuni serotype O:23/36 (strain 81-176).